A 309-amino-acid chain; its full sequence is Pantoate--beta-alanine ligase (309 aa).

The protein belongs to the pantothenate synthetase family.

The protein resides in the cytoplasm. It is found in the nucleus. The enzyme catalyses (R)-pantoate + beta-alanine + ATP = (R)-pantothenate + AMP + diphosphate + H(+). Its pathway is cofactor biosynthesis; (R)-pantothenate biosynthesis; (R)-pantothenate from (R)-pantoate and beta-alanine: step 1/1. Its function is as follows. Required for pantothenic acid biosynthesis. In Saccharomyces cerevisiae (strain ATCC 204508 / S288c) (Baker's yeast), this protein is Pantoate--beta-alanine ligase (PAN6).